We begin with the raw amino-acid sequence, 119 residues long: MSNIIQAIEKEQMRSDMPKFAPGDTVIVRVRVKEGEKERLQAFEGVVIAKRNRGLHSAFTVRKMSSNGEGVERVFQTHSPIVGSVEVKRRGVVRQAKLYYLRELTGKKARIKEKLGKKK.

It belongs to the bacterial ribosomal protein bL19 family.

Its function is as follows. This protein is located at the 30S-50S ribosomal subunit interface and may play a role in the structure and function of the aminoacyl-tRNA binding site. The chain is Large ribosomal subunit protein bL19 from Psychromonas ingrahamii (strain DSM 17664 / CCUG 51855 / 37).